We begin with the raw amino-acid sequence, 30 residues long: Varv peptide B (30 aa).

Positions Gly1–Asn30 form a cross-link, cyclopeptide (Gly-Asn). Cystine bridges form between Cys5–Cys19, Cys9–Cys21, and Cys14–Cys27.

This is a cyclic peptide.

Its function is as follows. Probably participates in a plant defense mechanism. This Viola arvensis (European field pansy) protein is Varv peptide B.